We begin with the raw amino-acid sequence, 514 residues long: ATP synthase subunit alpha (514 aa).

170–177 (GDRQIGKT) is a binding site for ATP.

Belongs to the ATPase alpha/beta chains family. In terms of assembly, F-type ATPases have 2 components, CF(1) - the catalytic core - and CF(0) - the membrane proton channel. CF(1) has five subunits: alpha(3), beta(3), gamma(1), delta(1), epsilon(1). CF(0) has three main subunits: a(1), b(2) and c(9-12). The alpha and beta chains form an alternating ring which encloses part of the gamma chain. CF(1) is attached to CF(0) by a central stalk formed by the gamma and epsilon chains, while a peripheral stalk is formed by the delta and b chains.

It localises to the cell inner membrane. It carries out the reaction ATP + H2O + 4 H(+)(in) = ADP + phosphate + 5 H(+)(out). In terms of biological role, produces ATP from ADP in the presence of a proton gradient across the membrane. The alpha chain is a regulatory subunit. The sequence is that of ATP synthase subunit alpha from Pseudomonas putida (strain ATCC 47054 / DSM 6125 / CFBP 8728 / NCIMB 11950 / KT2440).